A 118-amino-acid chain; its full sequence is Cell division protein FtsB (118 aa).

Topologically, residues 1-6 (MRNWRW) are cytoplasmic. Residues 7–24 (LLLVLAALLAWLQHRFWF) form a helical membrane-spanning segment. Residues 25–118 (GPGNSGEVRM…DLSQPRREKR (94 aa)) are Periplasmic-facing. The stretch at 30–66 (GEVRMLQVQIVQQHQENERLRQRNASLAAEVKNLKDG) forms a coiled coil. The segment at 98-118 (LPNDTSADHGVDLSQPRREKR) is disordered. The span at 103–118 (SADHGVDLSQPRREKR) shows a compositional bias: basic and acidic residues.

Belongs to the FtsB family. In terms of assembly, part of a complex composed of FtsB, FtsL and FtsQ.

It localises to the cell inner membrane. Essential cell division protein. May link together the upstream cell division proteins, which are predominantly cytoplasmic, with the downstream cell division proteins, which are predominantly periplasmic. This chain is Cell division protein FtsB, found in Xylella fastidiosa (strain M12).